A 340-amino-acid chain; its full sequence is Probable glucan endo-1,3-beta-glucosidase BG1 (340 aa).

Residues 1–25 form the signal peptide; that stretch reads MDLRFLASLTLLLGLFFVNTNPTGG. Glutamate 120 serves as the catalytic Proton donor. The Nucleophile role is filled by glutamate 262.

This sequence belongs to the glycosyl hydrolase 17 family.

It is found in the secreted. It carries out the reaction Hydrolysis of (1-&gt;3)-beta-D-glucosidic linkages in (1-&gt;3)-beta-D-glucans.. Its function is as follows. May play a role in plant defense against pathogens. This is Probable glucan endo-1,3-beta-glucosidase BG1 from Arabidopsis thaliana (Mouse-ear cress).